We begin with the raw amino-acid sequence, 194 residues long: dCTP deaminase (194 aa).

Residues 110–115 (RSSLAR), aspartate 128, 136–138 (VLE), tyrosine 171, lysine 178, and glutamine 182 contribute to the dCTP site. Catalysis depends on glutamate 138, which acts as the Proton donor/acceptor. The interval 171–194 (YNKRKNAKYKDQQEAVASRISQDS) is disordered.

The protein belongs to the dCTP deaminase family. Homotrimer.

The enzyme catalyses dCTP + H2O + H(+) = dUTP + NH4(+). It functions in the pathway pyrimidine metabolism; dUMP biosynthesis; dUMP from dCTP (dUTP route): step 1/2. Its function is as follows. Catalyzes the deamination of dCTP to dUTP. In Shewanella amazonensis (strain ATCC BAA-1098 / SB2B), this protein is dCTP deaminase.